Reading from the N-terminus, the 53-residue chain is Antilisterial bacteriocin subtilosin biosynthesis protein AlbB (53 aa).

The next 2 helical transmembrane spans lie at 8 to 28 (ILLY…FVKS) and 30 to 50 (YLFT…ARKA).

It is found in the cell membrane. Involved in the production of the bacteriocin subtilosin. Required for maximal production and for optimal immunity to subtilosin. The sequence is that of Antilisterial bacteriocin subtilosin biosynthesis protein AlbB (albB) from Bacillus subtilis (strain 168).